Here is a 236-residue protein sequence, read N- to C-terminus: Ras-related protein RabY (236 aa).

18–25 (GDRKTGKT) is a GTP binding site. Residues 40–48 (YRQTNLLHF) carry the Effector region motif. Residues 66-70 (DSQAD) and 126-129 (NKSD) contribute to the GTP site. A compositionally biased stretch (low complexity) spans 192-225 (QQQQQQQQQQQQQQQQQQQQQQQQQQQQQQQHQQ). A disordered region spans residues 192–236 (QQQQQQQQQQQQQQQQQQQQQQQQQQQQQQQHQQSSKTKIGCLIQ). Cysteine methyl ester is present on cysteine 233. Cysteine 233 is lipidated: S-geranylgeranyl cysteine. The propeptide at 234-236 (LIQ) is removed in mature form.

Belongs to the small GTPase superfamily. Rab family.

The protein resides in the cell membrane. The sequence is that of Ras-related protein RabY (rabY) from Dictyostelium discoideum (Social amoeba).